The chain runs to 330 residues: Cathepsin S (330 aa).

Residues 1 to 17 form the signal peptide; that stretch reads MAVLGAPGVLCDNGATA. The propeptide at 18 to 112 is activation peptide; the sequence is ERPTLDHHWD…GTLKSSSNQT (95 aa). Asparagine 100 and asparagine 110 each carry an N-linked (GlcNAc...) asparagine glycan. 4 cysteine pairs are disulfide-bonded: cysteine 124-cysteine 222, cysteine 134-cysteine 179, cysteine 168-cysteine 211, and cysteine 271-cysteine 319. Residue cysteine 137 is part of the active site. Active-site residues include histidine 277 and asparagine 297.

It belongs to the peptidase C1 family. Monomer. As to expression, highest levels occur in the ileum followed by spleen, brain, thyroid, ovary and uterus. Low levels are found in the liver, kidney, jejunum and lung with lowest levels in the heart.

It localises to the lysosome. The protein localises to the secreted. The protein resides in the cytoplasmic vesicle. It is found in the phagosome. It carries out the reaction Similar to cathepsin L, but with much less activity on Z-Phe-Arg-|-NHMec, and more activity on the Z-Val-Val-Arg-|-Xaa compound.. Thiol protease. Key protease responsible for the removal of the invariant chain from MHC class II molecules and MHC class II antigen presentation. The bond-specificity of this proteinase is in part similar to the specificities of cathepsin L. The polypeptide is Cathepsin S (Ctss) (Rattus norvegicus (Rat)).